The chain runs to 879 residues: Protein translocase subunit SecA (879 aa).

ATP contacts are provided by residues glutamine 87, glycine 105–threonine 109, and aspartate 509. Residues isoleucine 834–alanine 879 form a disordered region. 4 residues coordinate Zn(2+): cysteine 856, cysteine 858, cysteine 867, and cysteine 868.

This sequence belongs to the SecA family. Monomer and homodimer. Part of the essential Sec protein translocation apparatus which comprises SecA, SecYEG and auxiliary proteins SecDF-YajC and YidC. Requires Zn(2+) as cofactor.

Its subcellular location is the cell inner membrane. It localises to the cytoplasm. It carries out the reaction ATP + H2O + cellular proteinSide 1 = ADP + phosphate + cellular proteinSide 2.. Part of the Sec protein translocase complex. Interacts with the SecYEG preprotein conducting channel. Has a central role in coupling the hydrolysis of ATP to the transfer of proteins into and across the cell membrane, serving as an ATP-driven molecular motor driving the stepwise translocation of polypeptide chains across the membrane. The sequence is that of Protein translocase subunit SecA from Sulfurovum sp. (strain NBC37-1).